Reading from the N-terminus, the 279-residue chain is Putative pyruvate, phosphate dikinase regulatory protein (279 aa).

153 to 160 (GVSRTSKT) contacts ADP.

The protein belongs to the pyruvate, phosphate/water dikinase regulatory protein family. PDRP subfamily.

It carries out the reaction N(tele)-phospho-L-histidyl/L-threonyl-[pyruvate, phosphate dikinase] + ADP = N(tele)-phospho-L-histidyl/O-phospho-L-threonyl-[pyruvate, phosphate dikinase] + AMP + H(+). It catalyses the reaction N(tele)-phospho-L-histidyl/O-phospho-L-threonyl-[pyruvate, phosphate dikinase] + phosphate + H(+) = N(tele)-phospho-L-histidyl/L-threonyl-[pyruvate, phosphate dikinase] + diphosphate. Bifunctional serine/threonine kinase and phosphorylase involved in the regulation of the pyruvate, phosphate dikinase (PPDK) by catalyzing its phosphorylation/dephosphorylation. This is Putative pyruvate, phosphate dikinase regulatory protein from Rhodopseudomonas palustris (strain BisB5).